The primary structure comprises 118 residues: BolA-like protein 3 (118 aa).

The protein belongs to the BolA/IbaG family. Interacts with NFU1.

The protein localises to the mitochondrion matrix. Functionally, acts as a mitochondrial iron-sulfur (Fe-S) cluster assembly factor that facilitates [4Fe-4S] cluster insertion into a subset of mitochondrial proteins such as lipoyl synthase (LS) and succinate dehydrogenase (SDH). Required during the last step of iron-sulfur protein assembly when the iron-sulfur cluster is inserted into the target protein. Acts together with NFU1, later than BOL1 and GRX5 in the [4Fe-4S] cluster insertion process. Not required for [2Fe-2S] cluster insertion into mitochondrial proteins. The polypeptide is BolA-like protein 3 (Saccharomyces cerevisiae (strain ATCC 204508 / S288c) (Baker's yeast)).